Reading from the N-terminus, the 233-residue chain is 2-C-methyl-D-erythritol 4-phosphate cytidylyltransferase (233 aa).

This sequence belongs to the IspD/TarI cytidylyltransferase family. IspD subfamily.

It catalyses the reaction 2-C-methyl-D-erythritol 4-phosphate + CTP + H(+) = 4-CDP-2-C-methyl-D-erythritol + diphosphate. Its pathway is isoprenoid biosynthesis; isopentenyl diphosphate biosynthesis via DXP pathway; isopentenyl diphosphate from 1-deoxy-D-xylulose 5-phosphate: step 2/6. Its function is as follows. Catalyzes the formation of 4-diphosphocytidyl-2-C-methyl-D-erythritol from CTP and 2-C-methyl-D-erythritol 4-phosphate (MEP). This chain is 2-C-methyl-D-erythritol 4-phosphate cytidylyltransferase, found in Thiobacillus denitrificans (strain ATCC 25259 / T1).